A 184-amino-acid polypeptide reads, in one-letter code: Ribosome-recycling factor (184 aa).

Belongs to the RRF family.

The protein localises to the cytoplasm. In terms of biological role, responsible for the release of ribosomes from messenger RNA at the termination of protein biosynthesis. May increase the efficiency of translation by recycling ribosomes from one round of translation to another. In Bifidobacterium adolescentis (strain ATCC 15703 / DSM 20083 / NCTC 11814 / E194a), this protein is Ribosome-recycling factor.